Consider the following 388-residue polypeptide: Serpin B11 (388 aa).

An RCL region spans residues 338-362 (EEGTEAAAATGESISVKRLPVTVQF).

The protein belongs to the serpin family. Ov-serpin subfamily. Expressed in eye, lung, lymphocytes, thymus, stomach, uterus, heart, brain, liver, skeletal muscle, and in day 7, 15, and 17 embryos.

The protein resides in the cytoplasm. Its function is as follows. Inhibitor of serine proteases. Has moderate inhibitory activity for trypsin-like peptidases, but also some activity with cysteine peptidases, cathepsin L, K, and V, and the serine peptidase, tryptase gamma. The protein is Serpin B11 (Serpinb11) of Mus musculus (Mouse).